Here is an 88-residue protein sequence, read N- to C-terminus: Small ribosomal subunit protein bS20 (88 aa).

The protein belongs to the bacterial ribosomal protein bS20 family.

Its function is as follows. Binds directly to 16S ribosomal RNA. This chain is Small ribosomal subunit protein bS20, found in Clostridioides difficile (strain 630) (Peptoclostridium difficile).